A 204-amino-acid chain; its full sequence is Large ribosomal subunit protein bL25 (204 aa).

The tract at residues M1–S20 is disordered.

This sequence belongs to the bacterial ribosomal protein bL25 family. CTC subfamily. Part of the 50S ribosomal subunit; part of the 5S rRNA/L5/L18/L25 subcomplex. Contacts the 5S rRNA. Binds to the 5S rRNA independently of L5 and L18.

Its function is as follows. This is one of the proteins that binds to the 5S RNA in the ribosome where it forms part of the central protuberance. This chain is Large ribosomal subunit protein bL25, found in Rhizobium meliloti (strain 1021) (Ensifer meliloti).